A 258-amino-acid polypeptide reads, in one-letter code: Serine/arginine-rich splicing factor x16 (258 aa).

The RRM domain occupies 8–81; it reads RKVYVGDLGN…RRARVELSTG (74 aa). 2 disordered regions span residues 81-113 and 130-258; these read GKYARSGGGGGGGGGGGGGGGLGGRDRGGGGRG and CRER…VSRD. The span at 86–103 shows a compositional bias: gly residues; sequence SGGGGGGGGGGGGGGGLG. The span at 104-113 shows a compositional bias: basic and acidic residues; sequence GRDRGGGGRG. The CCHC-type zinc-finger motif lies at 116-132; the sequence is KCYECGGRGHFARHCRE. Basic residues-rich tracts occupy residues 130–141 and 149–166; these read CRERKARQRRRS and STSRRRRTRSKSGTRSRS. 2 stretches are compositionally biased toward basic and acidic residues: residues 180-197 and 210-221; these read NGRDENGSASRYSDHERN and RRYEDEDDDRVR. Composition is skewed to low complexity over residues 231 to 240 and 249 to 258; these read RSASPAVRRG and SSASRSVSRD.

In terms of assembly, interacts (via Arg/Ser-rich region) with Alsin2/CG7564, Rbp1 and Doa (via N-terminus). Post-translationally, highly phosphorylated. May be phosphorylated by the serine/threonine-protein kinase Doa.

It is found in the nucleus. In terms of biological role, serine/arginine-rich splicing factor (SR protein) involved in differential exon usage during RNA transcript processing, probably by binding exonic splicing enhancer elements and recruiting components of the splicing machinery. Binds RNA stem-loop structures with consensus sequence 5'-CCGUNUNKNW-3'. Regulator of genes involved in lipid and carbohydrate metabolism, the immune response and the response to xenobiotics. This Drosophila melanogaster (Fruit fly) protein is Serine/arginine-rich splicing factor x16.